Here is a 165-residue protein sequence, read N- to C-terminus: Phosphopantetheine adenylyltransferase (165 aa).

Residue S9 coordinates substrate. ATP is bound by residues 9–10 (SF) and H17. 3 residues coordinate substrate: K41, I75, and R89. Residues 90 to 92 (GVR), E100, and 125 to 131 (YLFVRSD) each bind ATP.

It belongs to the bacterial CoaD family. As to quaternary structure, homohexamer. It depends on Mg(2+) as a cofactor.

It localises to the cytoplasm. It carries out the reaction (R)-4'-phosphopantetheine + ATP + H(+) = 3'-dephospho-CoA + diphosphate. It participates in cofactor biosynthesis; coenzyme A biosynthesis; CoA from (R)-pantothenate: step 4/5. In terms of biological role, reversibly transfers an adenylyl group from ATP to 4'-phosphopantetheine, yielding dephospho-CoA (dPCoA) and pyrophosphate. This is Phosphopantetheine adenylyltransferase from Borrelia duttonii (strain Ly).